A 505-amino-acid polypeptide reads, in one-letter code: 4-alpha-glucanotransferase (505 aa).

It belongs to the disproportionating enzyme family.

The protein localises to the cytoplasm. The catalysed reaction is Transfers a segment of a (1-&gt;4)-alpha-D-glucan to a new position in an acceptor, which may be glucose or a (1-&gt;4)-alpha-D-glucan.. This Synechocystis sp. (strain ATCC 27184 / PCC 6803 / Kazusa) protein is 4-alpha-glucanotransferase (malQ).